A 211-amino-acid polypeptide reads, in one-letter code: Prolactin-1 (211 aa).

The signal sequence occupies residues 1–23 (MARRSQGTKLHLAVLCLVVSCHA). Cystine bridges form between cysteine 69–cysteine 184 and cysteine 201–cysteine 211.

The protein belongs to the somatotropin/prolactin family.

It localises to the secreted. In Oncorhynchus keta (Chum salmon), this protein is Prolactin-1 (prl1).